The following is a 349-amino-acid chain: NADP-dependent alcohol dehydrogenase C 1 (349 aa).

Residues cysteine 41, histidine 63, cysteine 94, cysteine 97, cysteine 100, cysteine 108, and cysteine 159 each coordinate Zn(2+). Lysine 210 is covalently cross-linked (Isoglutamyl lysine isopeptide (Lys-Gln) (interchain with Q-Cter in protein Pup)).

It belongs to the zinc-containing alcohol dehydrogenase family. The cofactor is Zn(2+).

The catalysed reaction is a primary alcohol + NADP(+) = an aldehyde + NADPH + H(+). In terms of biological role, prefers aldehydes over alcohols. This Mycolicibacterium smegmatis (strain ATCC 700084 / mc(2)155) (Mycobacterium smegmatis) protein is NADP-dependent alcohol dehydrogenase C 1 (adhc1).